Consider the following 588-residue polypeptide: Synaptotagmin-3 (588 aa).

Topologically, residues 1–54 are vesicular; the sequence is MSGDYEDDLCRRALILVSDLCARIRDADTNDRCQEFNELRIRGYPRGPDADISV. Residues 10-34 form a cysteine motif region; that stretch reads CRRALILVSDLCARIRDADTNDRCQ. A helical membrane pass occupies residues 55–75; it reads SLLSVIVTFCGIVLLGVSLFV. Topologically, residues 76-588 are cytoplasmic; the sequence is SWKLCWVPWR…KGLSEKENSE (513 aa). Disordered regions lie at residues 129-161, 183-222, and 238-257; these read GGPH…PEPS, PSQT…VTSL, and QTLT…ALPL. The segment covering 183–205 has biased composition (low complexity); sequence PSQTSPELPSEGGTGSGLLLLPP. A compositionally biased stretch (polar residues) spans 213–222; the sequence is AQSHQQVTSL. Arg286 carries the post-translational modification Omega-N-methylarginine. C2 domains are found at residues 297 to 418 and 429 to 563; these read PCGR…PLWR and DLGE…EHWH. Asp328, Asp334, Asp386, Phe387, Asp388, Ser391, Asp394, Asp460, Asp466, Asp520, and Asp522 together coordinate Ca(2+).

Belongs to the synaptotagmin family. As to quaternary structure, homodimer; disulfide-linked via the cysteine motif. Can also form heterodimers with SYT6, SYT9 and SYT10. Ca(2+) is required as a cofactor. Brain, various endocrine tissues and hormone-secreting clonal cells.

The protein localises to the cell membrane. It localises to the cytoplasmic vesicle. The protein resides in the secretory vesicle membrane. Its function is as follows. Ca(2+) sensor involved in Ca(2+)-dependent exocytosis of secretory vesicles through Ca(2+) and phospholipid binding to the C2 domain. Ca(2+) induces binding of the C2-domains to phospholipid membranes and to assembled SNARE-complexes; both actions contribute to triggering exocytosis. Plays a role in dendrite formation by melanocytes. The chain is Synaptotagmin-3 (Syt3) from Rattus norvegicus (Rat).